The chain runs to 955 residues: 2-oxoglutarate dehydrogenase E1 component (955 aa).

The protein belongs to the alpha-ketoglutarate dehydrogenase family. Homodimer. Part of the 2-oxoglutarate dehydrogenase (OGDH) complex composed of E1 (2-oxoglutarate dehydrogenase), E2 (dihydrolipoamide succinyltransferase) and E3 (dihydrolipoamide dehydrogenase); the complex contains multiple copies of the three enzymatic components (E1, E2 and E3). Thiamine diphosphate serves as cofactor.

It catalyses the reaction N(6)-[(R)-lipoyl]-L-lysyl-[protein] + 2-oxoglutarate + H(+) = N(6)-[(R)-S(8)-succinyldihydrolipoyl]-L-lysyl-[protein] + CO2. Functionally, E1 component of the 2-oxoglutarate dehydrogenase (OGDH) complex which catalyzes the decarboxylation of 2-oxoglutarate, the first step in the conversion of 2-oxoglutarate to succinyl-CoA and CO(2). The sequence is that of 2-oxoglutarate dehydrogenase E1 component from Bacillus mycoides (strain KBAB4) (Bacillus weihenstephanensis).